A 443-amino-acid chain; its full sequence is Cyclin-A2-1 (443 aa).

Residues 1–10 are compositionally biased toward basic residues; that stretch reads MHRASSKHTN. The interval 1 to 61 is disordered; that stretch reads MHRASSKHTN…KRVARPSNKR (61 aa). Positions 11-25 are enriched in basic and acidic residues; that stretch reads AKKEAISTSKIRDNN.

It belongs to the cyclin family. Cyclin AB subfamily. As to expression, expressed in tissues with active cell division: apical root and shoot meristems, lateral root and leaf primordia, floral meristems and developing pollen.

May negatively regulate endocycles and act as a regulator of ploidy levels in endoreduplication. The protein is Cyclin-A2-1 (CYCA2-1) of Arabidopsis thaliana (Mouse-ear cress).